The sequence spans 445 residues: Baccatin III:3-amino-3-phenylpropanoyltransferase (445 aa).

It belongs to the plant acyltransferase family.

The catalysed reaction is (3R)-3-amino-3-phenylpropanoyl-CoA + baccatin III = 3'-N-debenzoyl-2'-deoxytaxol + CoA. Its pathway is alkaloid biosynthesis; taxol biosynthesis. Functionally, acyltransferase involved in taxol biosynthesis. Catalyzes the selective 13-O-acylation of baccatin III with (3R)-3-amino-3-phenylpropanoyl-CoA as the acyl donor to form 3'-N-debenzoyl-2'-deoxytaxol. In Taxus cuspidata (Japanese yew), this protein is Baccatin III:3-amino-3-phenylpropanoyltransferase.